Reading from the N-terminus, the 267-residue chain is Placental prolactin-related protein 2 (267 aa).

2 N-linked (GlcNAc...) asparagine glycosylation sites follow: N99 and N121. Cystine bridges form between C126/C244 and C261/C267.

Belongs to the somatotropin/prolactin family.

The protein localises to the secreted. Functionally, placental prolactin-related proteins may play a specific role during gestation. This is Placental prolactin-related protein 2 (PRP2) from Bos taurus (Bovine).